Here is a 140-residue protein sequence, read N- to C-terminus: uncharacterized protein (140 aa).

A run of 2 helical transmembrane segments spans residues 4-21 (ILKI…YLFG) and 26-48 (LVKV…SGYL).

The protein belongs to the bacteriophage holin family. Cp-1 holin subfamily.

It is found in the cell membrane. This is an uncharacterized protein from Listeria innocua serovar 6a (strain ATCC BAA-680 / CLIP 11262).